We begin with the raw amino-acid sequence, 104 residues long: Snakin-2 (104 aa).

A signal peptide spans 1–23 (MAISKALFASLLLSLLLLEQVQS). Positions 24-38 (IQTDQVTSNAISEAA) are cleaved as a propeptide — removed in mature form.

Belongs to the GASA family. In terms of processing, six disulfide bonds may be present. In terms of tissue distribution, expressed in tubers, stems, flowers, shoot apex and leaves, but not in roots or stolons.

The protein resides in the secreted. It is found in the cell wall. Its function is as follows. Has an antimicrobial activity. Causes a rapid aggregation of both Gram-positive and Gram-negative bacteria, but the antimicrobial activity is not correlated with the capacity to aggregate bacteria. The sequence is that of Snakin-2 (SN2) from Solanum tuberosum (Potato).